A 246-amino-acid polypeptide reads, in one-letter code: Outer membrane protein assembly factor BamD (246 aa).

An N-terminal signal peptide occupies residues 1 to 22 (MKKKNSIIFVFMILFFNSTVQS).

It belongs to the BamD family. As to quaternary structure, part of the Bam complex.

Its subcellular location is the cell outer membrane. Functionally, part of the outer membrane protein assembly complex, which is involved in assembly and insertion of beta-barrel proteins into the outer membrane. This chain is Outer membrane protein assembly factor BamD, found in Buchnera aphidicola subsp. Acyrthosiphon pisum (strain APS) (Acyrthosiphon pisum symbiotic bacterium).